A 479-amino-acid polypeptide reads, in one-letter code: ATP synthase subunit beta (479 aa).

153-160 (GGAGVGKT) lines the ATP pocket.

The protein belongs to the ATPase alpha/beta chains family. F-type ATPases have 2 components, CF(1) - the catalytic core - and CF(0) - the membrane proton channel. CF(1) has five subunits: alpha(3), beta(3), gamma(1), delta(1), epsilon(1). CF(0) has three main subunits: a(1), b(2) and c(9-12). The alpha and beta chains form an alternating ring which encloses part of the gamma chain. CF(1) is attached to CF(0) by a central stalk formed by the gamma and epsilon chains, while a peripheral stalk is formed by the delta and b chains.

The protein localises to the cell membrane. The enzyme catalyses ATP + H2O + 4 H(+)(in) = ADP + phosphate + 5 H(+)(out). In terms of biological role, produces ATP from ADP in the presence of a proton gradient across the membrane. The catalytic sites are hosted primarily by the beta subunits. In Lactobacillus delbrueckii subsp. bulgaricus (strain ATCC 11842 / DSM 20081 / BCRC 10696 / JCM 1002 / NBRC 13953 / NCIMB 11778 / NCTC 12712 / WDCM 00102 / Lb 14), this protein is ATP synthase subunit beta.